The primary structure comprises 462 residues: Integrator complex subunit 12 (462 aa).

Residues 42–129 (GIDSSYRPSQ…LEKPETQSSP (88 aa)) are disordered. Residues 59–86 (ISSTKNISIKQEPKISSSLPSGNNNGKV) show a composition bias toward polar residues. A Glycyl lysine isopeptide (Lys-Gly) (interchain with G-Cter in SUMO2) cross-link involves residue Lys-68. Residues 88–124 (TTEKVKKEAEKRPADKMKSDITEGVDIPKKPRLEKPE) show a composition bias toward basic and acidic residues. At Ser-128 the chain carries Phosphoserine. A PHD-type zinc finger spans residues 159–215 (GLACVVCRQMMVASGNQLVECQECHNLYHRDCHKPQVTDKEANDPRLVWYCARCTRQ). A Glycyl lysine isopeptide (Lys-Gly) (interchain with G-Cter in SUMO2) cross-link involves residue Lys-254. The segment covering 301–328 (SSAGPSTAKLSSTTQNSTGKPATSSANQ) has biased composition (polar residues). A disordered region spans residues 301–462 (SSAGPSTAKL…KKAAQKKLKK (162 aa)). Composition is skewed to low complexity over residues 347–358 (KIGSNNSTTPTV) and 396–437 (GNSS…GPTS). Basic residues predominate over residues 449–462 (QMVKKKAAQKKLKK).

Belongs to the Integrator subunit 12 family. In terms of assembly, component of the Integrator complex, composed of core subunits INTS1, INTS2, INTS3, INTS4, INTS5, INTS6, INTS7, INTS8, INTS9/RC74, INTS10, INTS11/CPSF3L, INTS12, INTS13, INTS14 and INTS15. The core complex associates with protein phosphatase 2A subunits PPP2CA and PPP2R1A, to form the Integrator-PP2A (INTAC) complex. In terms of processing, dephosphorylated at Ser-128 by the PNUTS-PP1 complex, promoting RNA polymerase II transcription pause-release.

It localises to the nucleus. Component of the integrator complex, a multiprotein complex that terminates RNA polymerase II (Pol II) transcription in the promoter-proximal region of genes. The integrator complex provides a quality checkpoint during transcription elongation by driving premature transcription termination of transcripts that are unfavorably configured for transcriptional elongation: the complex terminates transcription by (1) catalyzing dephosphorylation of the C-terminal domain (CTD) of Pol II subunit POLR2A/RPB1 and SUPT5H/SPT5, (2) degrading the exiting nascent RNA transcript via endonuclease activity and (3) promoting the release of Pol II from bound DNA. The integrator complex is also involved in terminating the synthesis of non-coding Pol II transcripts, such as enhancer RNAs (eRNAs), small nuclear RNAs (snRNAs), telomerase RNAs and long non-coding RNAs (lncRNAs). Mediates recruitment of cytoplasmic dynein to the nuclear envelope, probably as component of the integrator complex. The polypeptide is Integrator complex subunit 12 (INTS12) (Macaca fascicularis (Crab-eating macaque)).